The sequence spans 1434 residues: Receptor-type tyrosine-protein phosphatase U (1434 aa).

Positions 1 to 17 (MRSARALLLALALRVCA) are cleaved as a signal peptide. Residues 18-748 (LDSETPSAGC…QHSEEMGLIL (731 aa)) lie on the Extracellular side of the membrane. The 163-residue stretch at 25–187 (AGCTFEEDDD…ILLLNYPCSK (163 aa)) folds into the MAM domain. A glycan (N-linked (GlcNAc...) asparagine) is linked at Asn-74. The 86-residue stretch at 189–274 (PHFSRLGDVE…TQSSRGSGVS (86 aa)) folds into the Ig-like C2-type domain. A disulfide bridge connects residues Cys-209 and Cys-263. 4 consecutive Fibronectin type-III domains span residues 287–382 (PIAP…CAEP), 385–483 (APKG…TDED), 484–590 (VPGG…SAPT), and 597–677 (PSPL…TEAK). An N-linked (GlcNAc...) asparagine glycan is attached at Asn-409. N-linked (GlcNAc...) asparagine glycosylation occurs at Asn-684. Residues 749–769 (GICAGGLVVLIILLGAIIVVI) form a helical membrane-spanning segment. The Cytoplasmic segment spans residues 770 to 1434 (RKGKPVNMTK…LEYLESLETR (665 aa)). A compositionally biased stretch (polar residues) spans 824–839 (RGDQRSSVVNESSSLL). Residues 824–851 (RGDQRSSVVNESSSLLGGSPRRQCGRKG) are disordered. 2 consecutive Tyrosine-protein phosphatase domains span residues 876–1132 (KTAE…ILEA) and 1164–1427 (LREE…ALEY). Substrate is bound by residues Glu-1041, 1073-1079 (CSAGTGR), and Gln-1117. Catalysis depends on Cys-1073, which acts as the Phosphocysteine intermediate. The active-site Phosphocysteine intermediate is the Cys-1368.

Belongs to the protein-tyrosine phosphatase family. Receptor class 2B subfamily.

Its subcellular location is the cell junction. It localises to the cell membrane. The enzyme catalyses O-phospho-L-tyrosyl-[protein] + H2O = L-tyrosyl-[protein] + phosphate. Tyrosine-protein phosphatase which dephosphorylates CTNNB1. May function in cell proliferation and migration and play a role in the maintenance of epithelial integrity. This is Receptor-type tyrosine-protein phosphatase U (PTPRU) from Gallus gallus (Chicken).